The chain runs to 131 residues: UPF0102 protein YraN (131 aa).

A compositionally biased stretch (polar residues) spans Met1 to Thr19. The segment at Met1–Gly20 is disordered.

It belongs to the UPF0102 family.

This Escherichia coli (strain 55989 / EAEC) protein is UPF0102 protein YraN.